A 137-amino-acid polypeptide reads, in one-letter code: Large ribosomal subunit protein uL16 (137 aa).

It belongs to the universal ribosomal protein uL16 family. In terms of assembly, part of the 50S ribosomal subunit.

Binds 23S rRNA and is also seen to make contacts with the A and possibly P site tRNAs. The protein is Large ribosomal subunit protein uL16 of Aromatoleum aromaticum (strain DSM 19018 / LMG 30748 / EbN1) (Azoarcus sp. (strain EbN1)).